The sequence spans 340 residues: MDAASVSFGSGHDLSSQPRHDWTRSEAETLYNLPFADLIFQAQTLHRRHFDPNHVETANLLSIKTGGCPEDCGYCSQSAHYDSGVKATKLMDREAVIETARRARDAGASRFCMAAAWRNPKDRDLDRVCDMVSAVKELGLETCATLGMLTPDQARRLHDAGLDFYNHNVDTSPEFYGNIITTRTMQDRIDTLAHAREAGLKVCCGGIIGLGEQVGDRLGMLMLLANLPAHPESVPINMWNEVKSVPVNDTAERPDPIALVRMIAVARIMMPRSVVRLSAGRQYMTDELQALCFLAGANSIFIGDVLLTTKNPQTARDAALLDRLGIRSRLDDAKAAAPPH.

Residues 1 to 21 are disordered; sequence MDAASVSFGSGHDLSSQPRHD. A Radical SAM core domain is found at 53–272; that stretch reads NHVETANLLS…IAVARIMMPR (220 aa). 3 residues coordinate [4Fe-4S] cluster: Cys-68, Cys-72, and Cys-75. Residues Cys-112, Cys-143, Cys-203, and Arg-276 each contribute to the [2Fe-2S] cluster site.

It belongs to the radical SAM superfamily. Biotin synthase family. Homodimer. Requires [4Fe-4S] cluster as cofactor. [2Fe-2S] cluster is required as a cofactor.

The enzyme catalyses (4R,5S)-dethiobiotin + (sulfur carrier)-SH + 2 reduced [2Fe-2S]-[ferredoxin] + 2 S-adenosyl-L-methionine = (sulfur carrier)-H + biotin + 2 5'-deoxyadenosine + 2 L-methionine + 2 oxidized [2Fe-2S]-[ferredoxin]. The protein operates within cofactor biosynthesis; biotin biosynthesis; biotin from 7,8-diaminononanoate: step 2/2. Catalyzes the conversion of dethiobiotin (DTB) to biotin by the insertion of a sulfur atom into dethiobiotin via a radical-based mechanism. This Nitrobacter hamburgensis (strain DSM 10229 / NCIMB 13809 / X14) protein is Biotin synthase.